A 254-amino-acid polypeptide reads, in one-letter code: Ribonuclease PH (254 aa).

Phosphate contacts are provided by residues arginine 90 and 128-130 (GTR).

Belongs to the RNase PH family. In terms of assembly, homohexameric ring arranged as a trimer of dimers.

The enzyme catalyses tRNA(n+1) + phosphate = tRNA(n) + a ribonucleoside 5'-diphosphate. Functionally, phosphorolytic 3'-5' exoribonuclease that plays an important role in tRNA 3'-end maturation. Removes nucleotide residues following the 3'-CCA terminus of tRNAs; can also add nucleotides to the ends of RNA molecules by using nucleoside diphosphates as substrates, but this may not be physiologically important. Probably plays a role in initiation of 16S rRNA degradation (leading to ribosome degradation) during starvation. The polypeptide is Ribonuclease PH (Corynebacterium kroppenstedtii (strain DSM 44385 / JCM 11950 / CIP 105744 / CCUG 35717)).